Reading from the N-terminus, the 201-residue chain is NADH-quinone oxidoreductase subunit C 1 (201 aa).

Belongs to the complex I 30 kDa subunit family. NDH-1 is composed of 14 different subunits. Subunits NuoB, C, D, E, F, and G constitute the peripheral sector of the complex.

It localises to the cell inner membrane. It catalyses the reaction a quinone + NADH + 5 H(+)(in) = a quinol + NAD(+) + 4 H(+)(out). NDH-1 shuttles electrons from NADH, via FMN and iron-sulfur (Fe-S) centers, to quinones in the respiratory chain. The immediate electron acceptor for the enzyme in this species is believed to be ubiquinone. Couples the redox reaction to proton translocation (for every two electrons transferred, four hydrogen ions are translocated across the cytoplasmic membrane), and thus conserves the redox energy in a proton gradient. This chain is NADH-quinone oxidoreductase subunit C 1, found in Rhizobium meliloti (strain 1021) (Ensifer meliloti).